We begin with the raw amino-acid sequence, 236 residues long: Small ribosomal subunit protein eS6 (236 aa).

The protein belongs to the eukaryotic ribosomal protein eS6 family. Component of the small ribosomal subunit. Mature ribosomes consist of a small (40S) and a large (60S) subunit. The 40S subunit contains about 32 different proteins and 1 molecule of RNA (18S). The 60S subunit contains 45 different proteins and 3 molecules of RNA (25S, 5.8S and 5S).

The protein localises to the cytoplasm. Component of the ribosome, a large ribonucleoprotein complex responsible for the synthesis of proteins in the cell. The small ribosomal subunit (SSU) binds messenger RNAs (mRNAs) and translates the encoded message by selecting cognate aminoacyl-transfer RNA (tRNA) molecules. The large subunit (LSU) contains the ribosomal catalytic site termed the peptidyl transferase center (PTC), which catalyzes the formation of peptide bonds, thereby polymerizing the amino acids delivered by tRNAs into a polypeptide chain. The nascent polypeptides leave the ribosome through a tunnel in the LSU and interact with protein factors that function in enzymatic processing, targeting, and the membrane insertion of nascent chains at the exit of the ribosomal tunnel. RPS6A is involved in nucleolar processing of pre-18S ribosomal RNA and ribosome assembly. This is Small ribosomal subunit protein eS6 (RPS6A) from Candida albicans (strain SC5314 / ATCC MYA-2876) (Yeast).